Here is a 393-residue protein sequence, read N- to C-terminus: Branched-chain-amino-acid aminotransferase, mitochondrial (393 aa).

A mitochondrion-targeting transit peptide spans M1–T16. Position 219 is an N6-(pyridoxal phosphate)lysine (K219). T315 carries the post-translational modification Phosphothreonine.

This sequence belongs to the class-IV pyridoxal-phosphate-dependent aminotransferase family. It depends on pyridoxal 5'-phosphate as a cofactor.

The protein resides in the mitochondrion matrix. It carries out the reaction L-leucine + 2-oxoglutarate = 4-methyl-2-oxopentanoate + L-glutamate. The catalysed reaction is L-isoleucine + 2-oxoglutarate = (S)-3-methyl-2-oxopentanoate + L-glutamate. It catalyses the reaction L-valine + 2-oxoglutarate = 3-methyl-2-oxobutanoate + L-glutamate. The enzyme catalyses a 2-oxocarboxylate + L-methionine = 4-methylsulfanyl-2-oxobutanoate + an L-alpha-amino acid. Its pathway is amino-acid biosynthesis; L-isoleucine biosynthesis; L-isoleucine from 2-oxobutanoate: step 4/4. It functions in the pathway amino-acid biosynthesis; L-leucine biosynthesis; L-leucine from 3-methyl-2-oxobutanoate: step 4/4. The protein operates within amino-acid biosynthesis; L-valine biosynthesis; L-valine from pyruvate: step 4/4. It participates in amino-acid biosynthesis; L-methionine biosynthesis via salvage pathway; L-methionine from S-methyl-5-thio-alpha-D-ribose 1-phosphate: step 6/6. Mitochondrial isozyme of branched-chain-amino-acid aminotransferase, involved in the biosynthesis of the branched chain amino acids (BCAAs) leucine, isoleucine, and valine. Catalyzes the formation of methionine from 2-keto-4-methylthiobutyrate (KMTB) in the methionine salvage pathway primarily using BCAAs (leucine, isoleucine, and valine) as the amino donors. Appears to be involved in the regulation of the cell cycle, although this may be indirect via metabolic changes. Connects BCAAs and TCA-cycle metabolism governing TCA-cycle flux to activate TORC1 signaling. High copy suppressor of a temperature-sensitive mutation in the ABC transporter, ATM1. The chain is Branched-chain-amino-acid aminotransferase, mitochondrial from Saccharomyces cerevisiae (strain ATCC 204508 / S288c) (Baker's yeast).